We begin with the raw amino-acid sequence, 1133 residues long: uncharacterized protein (1133 aa).

Disordered stretches follow at residues 33–83, 305–629, 679–723, and 736–817; these read QFED…NSSS, PVSN…NSNS, GKLD…SVKR, and IESP…SEEV. Low complexity predominate over residues 39 to 83; it reads NNNNSNNNNNNNNSNNNNSNNNENINRKTGSTLLSSSTSQLNSSS. Residues 40 to 308 constitute a DNA-binding region (NDT80); sequence NNNSNNNNNN…GHPTCNPVSN (269 aa). Residues 305–316 show a composition bias toward polar residues; the sequence is PVSNNPSTPGTP. Residues 317 to 384 are compositionally biased toward low complexity; sequence ISNFDSSNNN…NNNSSGNSSS (68 aa). Residues 401-417 show a composition bias toward polar residues; sequence INSLSNHNSPHLTPIQY. Residues 418–452 show a composition bias toward low complexity; it reads NNNNNNSNNNSNNNNNNNNNNNNSNNNNNNSNNNN. The span at 453–470 shows a compositional bias: polar residues; it reads HQFQSNNRIFKGNLSNPF. Low complexity-rich tracts occupy residues 473 to 615 and 686 to 714; these read NYSQ…GNNS and NNSNNNSSNNNNSNNNSSNNNSNNNNNNN. Residues 736–747 are compositionally biased toward polar residues; it reads IESPQSYISSPT. Over residues 757–771 the composition is skewed to pro residues; that stretch reads QPQPQPQPQPQPQPQ. The segment covering 772 to 808 has biased composition (low complexity); the sequence is PQSQSQSQSQSQSQSQSQSQSQSQPIQQIVQQQLSSP. Residues 909–1020 enclose the Peptidase S74 domain; the sequence is SDKRVKENVK…KKVDNVCMEL (112 aa). The helical transmembrane segment at 1055 to 1075 threads the bilayer; that stretch reads IFIGIGVFTLFVIFGLVAVSI. The interval 1107-1133 is disordered; sequence SGSNSCYDSSSNSAIDTTTSTGSGSIK.

Its subcellular location is the membrane. This is an uncharacterized protein from Dictyostelium discoideum (Social amoeba).